The following is a 309-amino-acid chain: Zinc-finger homeodomain protein 5 (309 aa).

Residues 1–16 (MDMRSHEMIERRREDN) show a composition bias toward basic and acidic residues. Residues 1–21 (MDMRSHEMIERRREDNGNNNG) are disordered. The segment at 76-125 (YRECLKNHAASVGGSVHDGCGEFMPSGEEGTIEALRCAACDCHRNFHRKE) adopts a ZF-HD dimerization-type; degenerate zinc-finger fold. The homeobox DNA-binding region spans 240 to 303 (KKRFRTKFTT…NNKNNAKKPP (64 aa)).

Homo- and heterodimer with other ZFHD proteins. Interacts with MIF1, MIF2 and MIF3; these interactions prevent nuclear localization and DNA-binding to inhibit transcription regulation activity. Binds to ZHD1, ZHD2, ZHD4, ZHD10 and ZHD11. Mostly expressed in flowers and inflorescence.

It is found in the nucleus. Putative transcription factor. Binds DNA at 5'-ATTA-3' consensus promoter regions. Regulates floral architecture and leaf development. Regulators in the abscisic acid (ABA) signal pathway that confers sensitivity to ABA in an ARF2-dependent manner. The protein is Zinc-finger homeodomain protein 5 (ZHD5) of Arabidopsis thaliana (Mouse-ear cress).